The primary structure comprises 518 residues: MNNICKLNKFIISKSSSSLSSTSSKIKTNCLIKNAKMFSSSLNLNRFYSTNNTNNNKLKKPLSIGQATFETHPYLLDKNEITKGIKMKEFKDRREKLMKNFPIGSVVVIFTPPEPMMSYDIPWSFRQNTNFNYLTGFNEPEAVLVLVKTSELDHQSYLFVRERNEEKEKWDGARCGGENVKKYFGIDFGYNLTNRDIPILGKLLKSTTDGKLYCNTTPWNQLSNKLEPFLENIKFYTVESLLQQIRLIKSDAEIKMMLKSGEIAGTSFHETMKYTGTKSSSSSSSSSSSPLNEYQVSAYFEWCVKDKGAQRMSYPPVVAGGDNGHTLHYIQNNQLLNYCDLLLMDAGCEYWGYTSDITRTFPVSGKFTEAQSEVYQAVLDVNKKCIELCKPGETINSIHLKSVELIQAHLKRLGIINESNPNDYRLYYPHSIGHYLGMDTHDTLDFDYGVTLEPGMIITIEPGIYISKYDSNVPEKYRGISIRVEDDVVIPNLNNSPLVLTHLAPKEISEIESIMSNK.

A mitochondrion-targeting transit peptide spans 1–48 (MNNICKLNKFIISKSSSSLSSTSSKIKTNCLIKNAKMFSSSLNLNRFY). Substrate is bound by residues tyrosine 314, aspartate 345, aspartate 356, histidine 434, histidine 441, glutamate 461, and glutamate 485. 3 residues coordinate Mn(2+): aspartate 345, aspartate 356, and histidine 434. Glutamate 461 and glutamate 485 together coordinate Mn(2+).

This sequence belongs to the peptidase M24B family. As to quaternary structure, homodimer. Mn(2+) is required as a cofactor.

The protein localises to the mitochondrion. It localises to the cytoplasm. The enzyme catalyses Release of any N-terminal amino acid, including proline, that is linked to proline, even from a dipeptide or tripeptide.. In terms of biological role, catalyzes the removal of a penultimate prolyl residue from the N-termini of peptides, such as Leu-Pro-Ala. Also shows low activity towards peptides with Ala or Ser at the P1 position. The sequence is that of Xaa-Pro aminopeptidase 3 (xpnpep3) from Dictyostelium discoideum (Social amoeba).